The sequence spans 291 residues: Early E4 34 kDa protein (291 aa).

It belongs to the adenoviridae E4 30 to 34 kDa protein family. In terms of assembly, interacts with E1B-55k.

The protein resides in the host nucleus. The protein localises to the host cytoplasm. Plays a major role to prevent cellular inhibition of viral genome replication by nuclear bodies. Assembles an SCF-like E3 ubiquitin ligase complex based on the cellular proteins ELOB, ELOC, CUL5 and RBX1, in cooperation with viral E1B-55K. This viral RING-type ligase ubiquitinates cellular substrates prior to proteasomal degradation: p53/TP53, LIG4, MRE11-RAD50-NBS1 (MRN) complex, ITGA3, DAXX and BLM. This Homo sapiens (Human) protein is Early E4 34 kDa protein.